A 248-amino-acid chain; its full sequence is 3-deoxy-manno-octulosonate cytidylyltransferase (248 aa).

This sequence belongs to the KdsB family.

It is found in the cytoplasm. It catalyses the reaction 3-deoxy-alpha-D-manno-oct-2-ulosonate + CTP = CMP-3-deoxy-beta-D-manno-octulosonate + diphosphate. The protein operates within nucleotide-sugar biosynthesis; CMP-3-deoxy-D-manno-octulosonate biosynthesis; CMP-3-deoxy-D-manno-octulosonate from 3-deoxy-D-manno-octulosonate and CTP: step 1/1. It participates in bacterial outer membrane biogenesis; lipopolysaccharide biosynthesis. In terms of biological role, activates KDO (a required 8-carbon sugar) for incorporation into bacterial lipopolysaccharide in Gram-negative bacteria. The protein is 3-deoxy-manno-octulosonate cytidylyltransferase of Escherichia coli O6:H1 (strain CFT073 / ATCC 700928 / UPEC).